The following is a 335-amino-acid chain: MAKRYLLDFEKPLVELEKQIEQIKELARDSEVDVSQQLLQLETLAARRREEIFKSLTPAQKIQVARHPQRPSTLDFVQMFCDDWIELHGDRNGGDDMALIGGIGSINNRPVLMLGHQKGRDTKENVVRNFGMAKPGGYRKALRLMQHANRFSLPILTFIDTPGAYAGLKAEEHGQGEAIARNLREMFGLKVPIVATVIGEGGSGGALGIGVADRLLMFEHSVYTVASPEACASILWRDAAKAPEAASALKITGKDLLKLGIIDEVLPEPSGGNNWAPLDAGNTLKEAIEKHLNALLKMPEDELIEERYKKFRVLGKFIEANNIEEIYSEIPQKTE.

In terms of domain architecture, CoA carboxyltransferase C-terminal spans 40–294; sequence QLETLAARRR…KEAIEKHLNA (255 aa).

The protein belongs to the AccA family. In terms of assembly, acetyl-CoA carboxylase is a heterohexamer composed of biotin carboxyl carrier protein (AccB), biotin carboxylase (AccC) and two subunits each of ACCase subunit alpha (AccA) and ACCase subunit beta (AccD).

Its subcellular location is the cytoplasm. It catalyses the reaction N(6)-carboxybiotinyl-L-lysyl-[protein] + acetyl-CoA = N(6)-biotinyl-L-lysyl-[protein] + malonyl-CoA. It participates in lipid metabolism; malonyl-CoA biosynthesis; malonyl-CoA from acetyl-CoA: step 1/1. Component of the acetyl coenzyme A carboxylase (ACC) complex. First, biotin carboxylase catalyzes the carboxylation of biotin on its carrier protein (BCCP) and then the CO(2) group is transferred by the carboxyltransferase to acetyl-CoA to form malonyl-CoA. The chain is Acetyl-coenzyme A carboxylase carboxyl transferase subunit alpha from Prochlorococcus marinus (strain MIT 9301).